Here is a 419-residue protein sequence, read N- to C-terminus: Tyrosine--tRNA ligase 2 (419 aa).

Residue tyrosine 34 coordinates L-tyrosine. Residues 39 to 48 (PTGDSMHIGH) carry the 'HIGH' region motif. L-tyrosine is bound by residues tyrosine 168 and glutamine 172. Positions 230 to 234 (KFGKS) match the 'KMSKS' region motif. Lysine 233 contacts ATP. Residues 352-418 (KNIVEWLVDL…GKKNYSLVKL (67 aa)) enclose the S4 RNA-binding domain.

Belongs to the class-I aminoacyl-tRNA synthetase family. TyrS type 1 subfamily. Homodimer.

It is found in the cytoplasm. It catalyses the reaction tRNA(Tyr) + L-tyrosine + ATP = L-tyrosyl-tRNA(Tyr) + AMP + diphosphate + H(+). Its function is as follows. Catalyzes the attachment of tyrosine to tRNA(Tyr) in a two-step reaction: tyrosine is first activated by ATP to form Tyr-AMP and then transferred to the acceptor end of tRNA(Tyr). In Bacillus thuringiensis subsp. konkukian (strain 97-27), this protein is Tyrosine--tRNA ligase 2.